A 1623-amino-acid chain; its full sequence is RING finger protein 17 (1623 aa).

The segment at 1 to 22 is disordered; the sequence is MAAEASKTGPSRSSYQRMGRKS. An RING-type zinc finger spans residues 32 to 75; it reads CTRCGRRVSRSSGHHCELQCGHAFCELCLLMTEECTTIICPDCE. N6-acetyllysine is present on K234. Tudor domains are found at residues 726 to 784, 962 to 1021, and 1228 to 1285; these read CPVQ…FLNA, KWEN…LKTM, and FWKK…PDIP. The disordered stretch occupies residues 1438–1462; it reads NQSNQHSDTDDSGVSGESESESLDE. The Tudor 4 domain maps to 1479–1539; the sequence is DFRTEMPCLA…CQIPSHLMRY (61 aa).

As to quaternary structure, interacts with MXD1, MXD3, MXD4, MXI1 and PIWIL1. Self-associates. Testis specific.

It is found in the cytoplasm. The protein resides in the nucleus. Seems to be involved in regulation of transcriptional activity of MYC. In vitro, inhibits DNA-binding activity of Mad-MAX heterodimers. Can recruit Mad transcriptional repressors (MXD1, MXD3, MXD4 and MXI1) to the cytoplasm. May be involved in spermiogenesis. In Homo sapiens (Human), this protein is RING finger protein 17 (RNF17).